Consider the following 230-residue polypeptide: RNA chaperone ProQ (230 aa).

A disordered region spans residues 104 to 176 (AEAKARVQAQ…APRQNTEKLT (73 aa)). The span at 115-132 (AEQRAKKREAEGDKETSK) shows a compositional bias: basic and acidic residues.

It belongs to the ProQ family.

It localises to the cytoplasm. In terms of biological role, RNA chaperone with significant RNA binding, RNA strand exchange and RNA duplexing activities. May regulate ProP activity through an RNA-based, post-transcriptional mechanism. This chain is RNA chaperone ProQ, found in Proteus mirabilis (strain HI4320).